Reading from the N-terminus, the 704-residue chain is Elongation factor G (704 aa).

A tr-type G domain is found at 8-290 (ARYRNIGISA…AVIDYLPSPV (283 aa)). Residues 17–24 (AHIDAGKT), 88–92 (DTPGH), and 142–145 (NKMD) contribute to the GTP site.

This sequence belongs to the TRAFAC class translation factor GTPase superfamily. Classic translation factor GTPase family. EF-G/EF-2 subfamily.

The protein localises to the cytoplasm. Its function is as follows. Catalyzes the GTP-dependent ribosomal translocation step during translation elongation. During this step, the ribosome changes from the pre-translocational (PRE) to the post-translocational (POST) state as the newly formed A-site-bound peptidyl-tRNA and P-site-bound deacylated tRNA move to the P and E sites, respectively. Catalyzes the coordinated movement of the two tRNA molecules, the mRNA and conformational changes in the ribosome. The chain is Elongation factor G from Salmonella arizonae (strain ATCC BAA-731 / CDC346-86 / RSK2980).